The chain runs to 152 residues: Probable flagellum biosynthesis repressor protein FlbT (152 aa).

This sequence belongs to the FlbT family.

In terms of biological role, has a post-transcriptional repressor function in flagellum biogenesis. Associates with the 5'-UTR of fljK mRNA and promotes its degradation. This chain is Probable flagellum biosynthesis repressor protein FlbT, found in Brucella canis (strain ATCC 23365 / NCTC 10854 / RM-666).